Here is a 1505-residue protein sequence, read N- to C-terminus: Actin cytoskeleton-regulatory complex protein PAN1 (1505 aa).

Residues 1–30 (MFNSYQATGMGYNPNQQQQQPPPPQQQQQL) are disordered. The EH 1 domain occupies 85–174 (DQKKFEHLFR…QKWHNEVQSF (90 aa)). An EF-hand 1 domain is found at 118 to 153 (LTPVVLAEIWTLSDIDKTGALLFPEFALSLHLCNMA). Polar residues-rich tracts occupy residues 364–393 (ATGY…GYNF) and 403–413 (ATGLQRQPTGV). 2 disordered regions span residues 364–416 (ATGY…VLQQ) and 422–441 (LQQQ…PGEW). An EH 2 domain is found at 492–581 (EKQIYDRLFQ…PELIPPADKT (90 aa)). The 36-residue stretch at 525-560 (LGRQDLEAIWTLADTDDVGKLNKNQFAVAMHLIYRR) folds into the EF-hand 2 domain. Over residues 588–604 (SLKNSLKNGGAKQTRSK) the composition is skewed to polar residues. Residues 588-620 (SLKNSLKNGGAKQTRSKPMTKPDGSRFKNDDSD) form a disordered region. A coiled-coil region spans residues 677–752 (RTSDREVDAL…LVKLQLKRED (76 aa)). 2 disordered regions span residues 867 to 927 (EFAR…TYST) and 948 to 1505 (EKLG…GRVL). Over residues 872–885 (ADNTTTARSSSAYA) the composition is skewed to polar residues. 3 stretches are compositionally biased toward basic and acidic residues: residues 960-980 (KAAE…EEPP), 1034-1050 (SQRE…EKQY), and 1069-1079 (SQEHIVKENAK). Over residues 1086–1096 (QAPTSNYSQQP) the composition is skewed to polar residues. Over residues 1109 to 1123 (RATETEQAESKKESE) the composition is skewed to basic and acidic residues. Residues 1133–1175 (AAASTEPAQPAQPAQASQASKPAQPAQPANSTEPASASASEQP) show a composition bias toward low complexity. The span at 1193–1208 (VDTQKISMQRNFQRGT) shows a compositional bias: polar residues. Residues 1216 to 1225 (DSEEEDSEDE) are compositionally biased toward acidic residues. The span at 1261–1280 (PSKDEKSIGAENASGHESKM) shows a compositional bias: basic and acidic residues. Polar residues predominate over residues 1283 to 1319 (ELSSSENTAAGVSQVNETPAQSSYEEPSLQEQSSYES). A compositionally biased stretch (low complexity) spans 1321–1330 (AVPAAPSLPE). Positions 1331-1453 (SVPPPAPAPE…SIPPPPPAPP (123 aa)) are enriched in pro residues. Positions 1454–1472 (LSSNDSSLASAAAPPAGGA) are enriched in low complexity. The WH2 domain maps to 1474–1491 (NIGALLGQITGGKSLKKV).

This sequence belongs to the PAN1 family. Component of the PAN1 actin cytoskeleton-regulatory complex.

The protein localises to the cell membrane. It is found in the endosome membrane. Its subcellular location is the cytoplasm. It localises to the cytoskeleton. The protein resides in the actin patch. In terms of biological role, component of the PAN1 actin cytoskeleton-regulatory complex required for the internalization of endosomes during actin-coupled endocytosis. The complex links the site of endocytosis to the cell membrane-associated actin cytoskeleton. Mediates uptake of external molecules and vacuolar degradation of plasma membrane proteins. Plays a role in the proper organization of the cell membrane-associated actin cytoskeleton and promotes its destabilization. This Lodderomyces elongisporus (strain ATCC 11503 / CBS 2605 / JCM 1781 / NBRC 1676 / NRRL YB-4239) (Yeast) protein is Actin cytoskeleton-regulatory complex protein PAN1 (PAN1).